A 151-amino-acid polypeptide reads, in one-letter code: Flagellar assembly factor FliW 2 (151 aa).

It belongs to the FliW family. Interacts with translational regulator CsrA and flagellin(s).

It is found in the cytoplasm. Functionally, acts as an anti-CsrA protein, binds CsrA and prevents it from repressing translation of its target genes, one of which is flagellin. Binds to flagellin and participates in the assembly of the flagellum. The polypeptide is Flagellar assembly factor FliW 2 (Desulfotalea psychrophila (strain LSv54 / DSM 12343)).